We begin with the raw amino-acid sequence, 553 residues long: Serine/threonine-protein kinase WNG2 (553 aa).

Disordered stretches follow at residues Met-1–Arg-20 and Asn-88–Glu-107. A signal peptide spans Met-1 to Ala-64. Positions Phe-125–Phe-395 constitute a Protein kinase domain. Lys-186 provides a ligand contact to ATP. Asp-278 functions as the Proton acceptor in the catalytic mechanism. Residues Arg-432–Ser-553 form a disordered region. Positions Ala-438 to Lys-451 are enriched in low complexity. Composition is skewed to basic and acidic residues over residues Gly-465 to Arg-486, Glu-494 to Glu-524, and Gln-531 to Ser-553.

This sequence belongs to the protein kinase superfamily. STE Ser/Thr protein kinase family. WNG subfamily. The cofactor is Mg(2+).

The protein localises to the cytoplasmic granule. It localises to the secreted. Its subcellular location is the parasitophorous vacuole lumen. It catalyses the reaction L-seryl-[protein] + ATP = O-phospho-L-seryl-[protein] + ADP + H(+). The catalysed reaction is L-threonyl-[protein] + ATP = O-phospho-L-threonyl-[protein] + ADP + H(+). Its function is as follows. Probable serine/threonine-protein kinase. The sequence is that of Serine/threonine-protein kinase WNG2 from Toxoplasma gondii.